A 478-amino-acid chain; its full sequence is Glycogen synthase (478 aa).

Lys-15 is an ADP-alpha-D-glucose binding site.

The protein belongs to the glycosyltransferase 1 family. Bacterial/plant glycogen synthase subfamily.

It catalyses the reaction [(1-&gt;4)-alpha-D-glucosyl](n) + ADP-alpha-D-glucose = [(1-&gt;4)-alpha-D-glucosyl](n+1) + ADP + H(+). It functions in the pathway glycan biosynthesis; glycogen biosynthesis. Functionally, synthesizes alpha-1,4-glucan chains using ADP-glucose. In Actinobacillus pleuropneumoniae serotype 5b (strain L20), this protein is Glycogen synthase.